The following is a 134-amino-acid chain: Profilin-3 (134 aa).

Cys-13 and Cys-118 are oxidised to a cystine. Positions Ala-84–Thr-100 match the Involved in PIP2 interaction motif. Thr-114 is subject to Phosphothreonine.

This sequence belongs to the profilin family. As to quaternary structure, occurs in many kinds of cells as a complex with monomeric actin in a 1:1 ratio. Post-translationally, phosphorylated by MAP kinases.

Its subcellular location is the cytoplasm. It localises to the cytoskeleton. Binds to actin and affects the structure of the cytoskeleton. At high concentrations, profilin prevents the polymerization of actin, whereas it enhances it at low concentrations. This is Profilin-3 from Olea europaea (Common olive).